The following is a 297-amino-acid chain: Nucleotide-binding protein Bphy_0322 (297 aa).

8 to 15 (GISGSGKS) contacts ATP. 57–60 (DARS) provides a ligand contact to GTP.

The protein belongs to the RapZ-like family.

Functionally, displays ATPase and GTPase activities. The protein is Nucleotide-binding protein Bphy_0322 of Paraburkholderia phymatum (strain DSM 17167 / CIP 108236 / LMG 21445 / STM815) (Burkholderia phymatum).